Consider the following 938-residue polypeptide: Isoleucine--tRNA ligase (938 aa).

Residues 58–68 (PYANGSIHIGH) carry the 'HIGH' region motif. K183 carries the N6-acetyllysine modification. An L-isoleucyl-5'-AMP-binding site is contributed by E561. The 'KMSKS' region signature appears at 602-606 (KMSKS). K605 lines the ATP pocket. Residues C901, C904, C921, and C924 each coordinate Zn(2+).

It belongs to the class-I aminoacyl-tRNA synthetase family. IleS type 1 subfamily. In terms of assembly, monomer. It depends on Zn(2+) as a cofactor.

It localises to the cytoplasm. The catalysed reaction is tRNA(Ile) + L-isoleucine + ATP = L-isoleucyl-tRNA(Ile) + AMP + diphosphate. Its function is as follows. Catalyzes the attachment of isoleucine to tRNA(Ile). As IleRS can inadvertently accommodate and process structurally similar amino acids such as valine, to avoid such errors it has two additional distinct tRNA(Ile)-dependent editing activities. One activity is designated as 'pretransfer' editing and involves the hydrolysis of activated Val-AMP. The other activity is designated 'posttransfer' editing and involves deacylation of mischarged Val-tRNA(Ile). This is Isoleucine--tRNA ligase from Escherichia coli O17:K52:H18 (strain UMN026 / ExPEC).